A 496-amino-acid chain; its full sequence is RNA-binding motif protein, Y chromosome, family 1 member E (496 aa).

The region spanning 8–85 (GKLFIGGLNR…KAIKVEQAKK (78 aa)) is the RRM domain. 2 disordered regions span residues 67-348 (DMNG…PHRD) and 453-496 (DQRN…SSRY). Composition is skewed to low complexity over residues 97 to 114 (PASS…SARG) and 149 to 159 (PVKRGPSSRSG). Residues 175 to 184 (NSWMGSQGPM) are compositionally biased toward polar residues. 6 stretches are compositionally biased toward basic and acidic residues: residues 204-214 (RNDRMSTRHDG), 242-253 (DNGHSNRDEHSS), 276-289 (AYRD…DESY), 313-326 (GYRD…HESY), 335-348 (SSRE…PHRD), and 484-496 (GESR…SSRY).

Interacts with splicing factor proteins SFRS3/SRP20, TRA2B/SFRS10, KHDRBS1/SAM68 and KHDRBS3. Testis-specific.

The protein resides in the nucleus. Functionally, RNA-binding protein which may be involved in spermatogenesis. Required for sperm development, possibly by participating in pre-mRNA splicing in the testis. The sequence is that of RNA-binding motif protein, Y chromosome, family 1 member E (RBMY1E) from Homo sapiens (Human).